The sequence spans 32 residues: Delta-actitoxin-Eqd1a (32 aa).

The protein belongs to the sea anemone short toxin (type III) family. In terms of processing, contains 4 disulfide bonds.

The protein resides in the secreted. The protein localises to the nematocyst. In terms of biological role, binds specifically to sodium channels (Nav) of the axonal membrane of crayfish and prolongs the falling phase of the action potential. It also increases the maximum rates of rise of both action potential and resting potential. Is only active on crustaceans. The chain is Delta-actitoxin-Eqd1a from Entacmaea quadricolor (Bubble-tip anemone).